The chain runs to 203 residues: Large ribosomal subunit protein uL13 (203 aa).

Ala-2 bears the N-acetylalanine mark. A Citrulline modification is found at Arg-59. Ser-77 carries the phosphoserine; by ZIPK/DAPK3 modification. Arg-140 bears the Citrulline mark. At Lys-191 the chain carries N6-acetyllysine.

Belongs to the universal ribosomal protein uL13 family. Component of the 60S ribosome. Component of the GAIT complex. Interacts with EIF4G1. Phosphorylation at Ser-77 upon interferon-gamma treatment in monocytes involves a DAPK1-DAPK3 kinase cascade and is causing release from the ribosome, association with the GAIT complex and subsequent involvement in transcript-selective translation inhibition. In terms of processing, citrullinated by PADI4.

Its subcellular location is the cytoplasm. Its function is as follows. Associated with ribosomes but is not required for canonical ribosome function and has extra-ribosomal functions. Component of the GAIT (gamma interferon-activated inhibitor of translation) complex which mediates interferon-gamma-induced transcript-selective translation inhibition in inflammation processes. Upon interferon-gamma activation and subsequent phosphorylation dissociates from the ribosome and assembles into the GAIT complex which binds to stem loop-containing GAIT elements in the 3'-UTR of diverse inflammatory mRNAs (such as ceruplasmin) and suppresses their translation. In the GAIT complex interacts with m7G cap-bound eIF4G at or near the eIF3-binding site and blocks the recruitment of the 43S ribosomal complex. Involved in methylation of rRNA. The sequence is that of Large ribosomal subunit protein uL13 (RPL13A) from Homo sapiens (Human).